The chain runs to 371 residues: Queuine tRNA-ribosyltransferase (371 aa).

The Proton acceptor role is filled by D90. Substrate is bound by residues 90–94, D144, Q189, and G215; that span reads DSGGF. The tract at residues 246–252 is RNA binding; that stretch reads GVGTPEN. Catalysis depends on D265, which acts as the Nucleophile. Residues 270–274 are RNA binding; important for wobble base 34 recognition; that stretch reads TRNAR. The Zn(2+) site is built by C303, C305, C308, and H334.

It belongs to the queuine tRNA-ribosyltransferase family. As to quaternary structure, homodimer. Within each dimer, one monomer is responsible for RNA recognition and catalysis, while the other monomer binds to the replacement base PreQ1. Requires Zn(2+) as cofactor.

The catalysed reaction is 7-aminomethyl-7-carbaguanine + guanosine(34) in tRNA = 7-aminomethyl-7-carbaguanosine(34) in tRNA + guanine. It functions in the pathway tRNA modification; tRNA-queuosine biosynthesis. Functionally, catalyzes the base-exchange of a guanine (G) residue with the queuine precursor 7-aminomethyl-7-deazaguanine (PreQ1) at position 34 (anticodon wobble position) in tRNAs with GU(N) anticodons (tRNA-Asp, -Asn, -His and -Tyr). Catalysis occurs through a double-displacement mechanism. The nucleophile active site attacks the C1' of nucleotide 34 to detach the guanine base from the RNA, forming a covalent enzyme-RNA intermediate. The proton acceptor active site deprotonates the incoming PreQ1, allowing a nucleophilic attack on the C1' of the ribose to form the product. After dissociation, two additional enzymatic reactions on the tRNA convert PreQ1 to queuine (Q), resulting in the hypermodified nucleoside queuosine (7-(((4,5-cis-dihydroxy-2-cyclopenten-1-yl)amino)methyl)-7-deazaguanosine). In Helicobacter pylori (strain G27), this protein is Queuine tRNA-ribosyltransferase.